The following is an 88-amino-acid chain: Small ribosomal subunit protein bS18 (88 aa).

Positions 1 to 22 are disordered; it reads MSTKNAKPKKEAQRRPSRKAKV.

Belongs to the bacterial ribosomal protein bS18 family. As to quaternary structure, part of the 30S ribosomal subunit. Forms a tight heterodimer with protein bS6.

Functionally, binds as a heterodimer with protein bS6 to the central domain of the 16S rRNA, where it helps stabilize the platform of the 30S subunit. The polypeptide is Small ribosomal subunit protein bS18 (rpsR) (Thermus thermophilus (strain ATCC BAA-163 / DSM 7039 / HB27)).